A 312-amino-acid polypeptide reads, in one-letter code: tRNA dimethylallyltransferase (312 aa).

11–18 serves as a coordination point for ATP; it reads GLTATGKT. 13 to 18 contributes to the substrate binding site; that stretch reads TATGKT. An interaction with substrate tRNA region spans residues 36-39; that stretch reads DSMC.

It belongs to the IPP transferase family. Monomer. Mg(2+) serves as cofactor.

The catalysed reaction is adenosine(37) in tRNA + dimethylallyl diphosphate = N(6)-dimethylallyladenosine(37) in tRNA + diphosphate. Its function is as follows. Catalyzes the transfer of a dimethylallyl group onto the adenine at position 37 in tRNAs that read codons beginning with uridine, leading to the formation of N6-(dimethylallyl)adenosine (i(6)A). This chain is tRNA dimethylallyltransferase, found in Caldicellulosiruptor saccharolyticus (strain ATCC 43494 / DSM 8903 / Tp8T 6331).